Here is a 363-residue protein sequence, read N- to C-terminus: Cleavage and termination factor 1 (363 aa).

The RRM domain occupies 7-85 (NVVFVGNIPY…RKIRVEFPSN (79 aa)). Residues 291–325 (QPASATSSPPSVPQKIPSSNHKSQQANGSDQGNEG) are disordered. Over residues 306-322 (IPSSNHKSQQANGSDQG) the composition is skewed to polar residues.

In terms of assembly, interacts with res2.

Its subcellular location is the nucleus. Its function is as follows. Component of the cleavage factor I (CF I) involved in pre-mRNA 3'-end processing. The polypeptide is Cleavage and termination factor 1 (ctf1) (Schizosaccharomyces pombe (strain 972 / ATCC 24843) (Fission yeast)).